We begin with the raw amino-acid sequence, 403 residues long: Blue light- and temperature-regulated antirepressor BluF (403 aa).

Positions 2-93 (LTTLIYRSHI…ARRFGKAGME (92 aa)) constitute a BLUF domain. Residues 98–144 (RLHERDDVLQAVFDKGTSKFQLTYDDRALQFFRTFVLATEQSTYFEI) form a joining helix region. Positions 155–403 (DGSDKELDSC…IPSIAWPEKK (249 aa)) constitute an EAL domain.

In terms of assembly, monomer, it undergoes transient dimerization following photoexcitation or upon temperature reduction, with a relaxation time of about 2 minutes. The dimer may be the inactive state. Interacts with the N- and C-terminal domains of BluR. Can also interact with the C-terminal domain of MlrA. It depends on FAD as a cofactor.

In terms of biological role, binds to and releases the BluR repressor from its bound DNA target in a blue light-dependent (470 nm) fashion. A shift to low temperature also triggers a BluF-mediated relief of repression by BluR, suggesting BluF may serve as a thermometer. Blue light may act to increase the affinity of BluF for BluR, allowing it to be released from its operator. The protein has a reversible photocycle, and undergoes structural changes, probably in the EAL domain, in response to light. The sequence is that of Blue light- and temperature-regulated antirepressor BluF from Escherichia coli (strain K12).